A 603-amino-acid chain; its full sequence is Elongation factor 4 (603 aa).

The tr-type G domain maps to 6 to 188; sequence SKIRNFCIIA…QIVKKIPAPT (183 aa). GTP contacts are provided by residues 18-23 and 135-138; these read DHGKST and NKVD.

It belongs to the TRAFAC class translation factor GTPase superfamily. Classic translation factor GTPase family. LepA subfamily.

The protein resides in the cell membrane. It catalyses the reaction GTP + H2O = GDP + phosphate + H(+). Functionally, required for accurate and efficient protein synthesis under certain stress conditions. May act as a fidelity factor of the translation reaction, by catalyzing a one-codon backward translocation of tRNAs on improperly translocated ribosomes. Back-translocation proceeds from a post-translocation (POST) complex to a pre-translocation (PRE) complex, thus giving elongation factor G a second chance to translocate the tRNAs correctly. Binds to ribosomes in a GTP-dependent manner. This Agathobacter rectalis (strain ATCC 33656 / DSM 3377 / JCM 17463 / KCTC 5835 / VPI 0990) (Eubacterium rectale) protein is Elongation factor 4.